The following is a 733-amino-acid chain: MATKFPKFSQALAQDPATRRIWYGIATAHDLEAHDGMTEENLYQKIFASHFGHLAIIFLWTSGNLFHVAWQGNFEKWVSNPLKTRPIAHSIWDPHFGESALKAFSKGNTYPVNITFSGLYQWWYTIGFRTNQELYKGSIGLLLLASVLLIAGWLHLQPKFRPSLSWFKNNESRLNHHLSGLLGFSSLAWTGHLVHVAIPASRGVHVGWDNFLTTPPHPAGLTPFFTGNWTVYAENPDSATHVFNTSEGSGTAILTFLGGFHPQTQSLWLSDMAHHHLAIAVVFIVAGHMYRTNFGIGHNMKEILDAHRPPGGRLGAGHVGLFETITNSLHMQLGLALACLGVATSLTAQHMYALTPYAYLSKDFTTEAALYTHHQYIAGFLMVGAFAHGAIFFVRDYDPELNKNNVLARMLEHKEAIISHLSWASLFLGFHTLGLYIHNDTVVAFGQPEKQILFEPLFAEYIQAASGKAVYQFNVLLASSTSPATAAGNQVWLPGWLEAINNPKTDLFLKIGPGDFLVHHAIALGLHVTALILVKGALDARGSKLMPDKKDFGYSFPCDGPGRGGTCDISAWDAFYLAMFWMLNTIGWVTFYWHWKHMTIWGGNPGQFDESSNYIMGWLRDYLWLNSSPLINGYNPFGMNNLSVWSWMFLFGHLIWATGFMFLISWRGYWQELIETLVWAHERTPLANLIRWRDKPVALSIVQARLVGLVHFSVGYILTYAAFVIASTSGKFA.

8 helical membrane-spanning segments follow: residues 46–69 (IFAS…FHVA), 134–157 (LYKG…LHLQ), 174–198 (LNHH…HVAI), 272–290 (MAHH…GHMY), 329–352 (LHMQ…QHMY), 368–394 (AALY…IFFV), 416–438 (AIIS…LYIH), and 516–534 (FLVH…LILV). 2 residues coordinate [4Fe-4S] cluster: cysteine 558 and cysteine 567. The next 2 membrane-spanning stretches (helical) occupy residues 574–595 (AFYL…YWHW) and 642–664 (LSVW…MFLI). 3 residues coordinate chlorophyll a: histidine 653, methionine 661, and tyrosine 669. Position 670 (tryptophan 670) interacts with phylloquinone. Residues 706 to 726 (LVGLVHFSVGYILTYAAFVIA) form a helical membrane-spanning segment.

It belongs to the PsaA/PsaB family. The PsaA/B heterodimer binds the P700 chlorophyll special pair and subsequent electron acceptors. PSI consists of a core antenna complex that captures photons, and an electron transfer chain that converts photonic excitation into a charge separation. The eukaryotic PSI reaction center is composed of at least 11 subunits. P700 is a chlorophyll a/chlorophyll a' dimer, A0 is one or more chlorophyll a, A1 is one or both phylloquinones and FX is a shared 4Fe-4S iron-sulfur center. is required as a cofactor.

It is found in the plastid. Its subcellular location is the chloroplast thylakoid membrane. The enzyme catalyses reduced [plastocyanin] + hnu + oxidized [2Fe-2S]-[ferredoxin] = oxidized [plastocyanin] + reduced [2Fe-2S]-[ferredoxin]. Its function is as follows. PsaA and PsaB bind P700, the primary electron donor of photosystem I (PSI), as well as the electron acceptors A0, A1 and FX. PSI is a plastocyanin/cytochrome c6-ferredoxin oxidoreductase, converting photonic excitation into a charge separation, which transfers an electron from the donor P700 chlorophyll pair to the spectroscopically characterized acceptors A0, A1, FX, FA and FB in turn. Oxidized P700 is reduced on the lumenal side of the thylakoid membrane by plastocyanin or cytochrome c6. The chain is Photosystem I P700 chlorophyll a apoprotein A2 from Thalassiosira pseudonana (Marine diatom).